Here is a 203-residue protein sequence, read N- to C-terminus: Probable Tat proofreading chaperone DmsD (203 aa).

This sequence belongs to the TorD/DmsD family. DmsD subfamily.

Functionally, required for biogenesis/assembly of DMSO reductase, but not for the interaction of the DmsA signal peptide with the Tat system. May be part of a chaperone cascade complex that facilitates a folding-maturation pathway for the substrate protein. This chain is Probable Tat proofreading chaperone DmsD, found in Haemophilus influenzae (strain ATCC 51907 / DSM 11121 / KW20 / Rd).